The following is a 247-amino-acid chain: Glucosamine-6-phosphate deaminase (247 aa).

The active-site Proton acceptor; for enolization step is aspartate 67. Catalysis depends on asparagine 136, which acts as the For ring-opening step. Histidine 138 serves as the catalytic Proton acceptor; for ring-opening step. Glutamate 143 functions as the For ring-opening step in the catalytic mechanism.

Belongs to the glucosamine/galactosamine-6-phosphate isomerase family. NagB subfamily.

It carries out the reaction alpha-D-glucosamine 6-phosphate + H2O = beta-D-fructose 6-phosphate + NH4(+). The protein operates within amino-sugar metabolism; N-acetylneuraminate degradation; D-fructose 6-phosphate from N-acetylneuraminate: step 5/5. Functionally, catalyzes the reversible isomerization-deamination of glucosamine 6-phosphate (GlcN6P) to form fructose 6-phosphate (Fru6P) and ammonium ion. The sequence is that of Glucosamine-6-phosphate deaminase from Shouchella clausii (strain KSM-K16) (Alkalihalobacillus clausii).